A 284-amino-acid polypeptide reads, in one-letter code: D-tagatose-1,6-bisphosphate aldolase subunit GatY (284 aa).

Asp82 (proton donor) is an active-site residue. Residues His83 and His180 each contribute to the Zn(2+) site. Dihydroxyacetone phosphate is bound at residue Gly181. His208 serves as a coordination point for Zn(2+). Dihydroxyacetone phosphate-binding positions include 209 to 211 and 230 to 233; these read GAS and NVAT.

This sequence belongs to the class II fructose-bisphosphate aldolase family. TagBP aldolase GatY subfamily. As to quaternary structure, forms a complex with GatZ. Zn(2+) is required as a cofactor.

It carries out the reaction D-tagatofuranose 1,6-bisphosphate = D-glyceraldehyde 3-phosphate + dihydroxyacetone phosphate. Its pathway is carbohydrate metabolism; D-tagatose 6-phosphate degradation; D-glyceraldehyde 3-phosphate and glycerone phosphate from D-tagatose 6-phosphate: step 2/2. Functionally, catalytic subunit of the tagatose-1,6-bisphosphate aldolase GatYZ, which catalyzes the reversible aldol condensation of dihydroxyacetone phosphate (DHAP or glycerone-phosphate) with glyceraldehyde 3-phosphate (G3P) to produce tagatose 1,6-bisphosphate (TBP). Requires GatZ subunit for full activity and stability. Is involved in the catabolism of galactitol. The protein is D-tagatose-1,6-bisphosphate aldolase subunit GatY of Shigella sonnei (strain Ss046).